The following is a 440-amino-acid chain: uncharacterized protein (440 aa).

The next 10 membrane-spanning stretches (helical) occupy residues 26–46 (NGLI…SSTF), 59–79 (FVFW…NGVL), 96–116 (FFLG…LKLK), 138–158 (LTLS…SIYL), 211–231 (FLVF…YLFA), 241–261 (LRKP…VGII), 263–283 (WIII…FVIF), 284–304 (WVIK…SLTI), 394–414 (FLII…SVFI), and 418–438 (IVQI…FTFI).

To M.pneumoniae MPN_087.

Its subcellular location is the cell membrane. This is an uncharacterized protein from Mycoplasma pneumoniae (strain ATCC 29342 / M129 / Subtype 1) (Mycoplasmoides pneumoniae).